The primary structure comprises 4083 residues: Dynein axonemal heavy chain 3 (4083 aa).

Disordered stretches follow at residues 1 to 37 (MSDTNCSAQKLDKSDSVHHMSHSQARPELPPLPVSAN) and 111 to 132 (DKTSQGLPLGTSSKTSTEPSKK). A stem region spans residues 1 to 1357 (MSDTNCSAQK…HVQMITTEAL (1357 aa)). Coiled-coil stretches lie at residues 1026 to 1052 (IKPIEAECRKWEEKLVRVQENLDAWLK) and 1108 to 1133 (RMTEKLQEANVLLEDIQRGLNDYLEK). 4 AAA regions span residues 1358–1579 (YGYE…VLTA), 1639–1870 (EALN…LHCK), 2003–2251 (TIPA…VIQG), and 2362–2613 (EFNS…LLRH). ATP contacts are provided by residues 1396 to 1403 (GPAGTGKT), 1677 to 1684 (GDPMGGKT), 2041 to 2048 (GPTGTGKS), and 2401 to 2408 (GIGGSGRQ). A stalk region spans residues 2628–2927 (FKTLLNSKRQ…NSLEKNIEIC (300 aa)). Residues 2651-2714 (QKLEFASSQV…DEKEANAAAA (64 aa)) adopt a coiled-coil conformation. 2 AAA regions span residues 3012 to 3242 (LGDP…EISE) and 3455 to 3679 (IQNF…QIQM).

The protein belongs to the dynein heavy chain family. Consists of at least two heavy chains and a number of intermediate and light chains.

It is found in the cytoplasm. It localises to the cytoskeleton. The protein resides in the cilium axoneme. In terms of biological role, force generating protein of respiratory cilia. Produces force towards the minus ends of microtubules. Dynein has ATPase activity; the force-producing power stroke is thought to occur on release of ADP. Involved in sperm motility; implicated in sperm flagellar assembly. The chain is Dynein axonemal heavy chain 3 (Dnah3) from Mus musculus (Mouse).